The sequence spans 349 residues: 3-isopropylmalate dehydrogenase (349 aa).

4 residues coordinate substrate: R91, R101, R129, and D219. Mg(2+) contacts are provided by D219, D243, and D247. Residue 277–289 coordinates NAD(+); the sequence is GSAPDIAGLGKAN.

It belongs to the isocitrate and isopropylmalate dehydrogenases family. LeuB type 1 subfamily. As to quaternary structure, homodimer. The cofactor is Mg(2+). Mn(2+) is required as a cofactor.

It localises to the cytoplasm. The enzyme catalyses (2R,3S)-3-isopropylmalate + NAD(+) = 4-methyl-2-oxopentanoate + CO2 + NADH. It functions in the pathway amino-acid biosynthesis; L-leucine biosynthesis; L-leucine from 3-methyl-2-oxobutanoate: step 3/4. Catalyzes the oxidation of 3-carboxy-2-hydroxy-4-methylpentanoate (3-isopropylmalate) to 3-carboxy-4-methyl-2-oxopentanoate. The product decarboxylates to 4-methyl-2 oxopentanoate. This chain is 3-isopropylmalate dehydrogenase, found in Zymomonas mobilis subsp. mobilis (strain ATCC 31821 / ZM4 / CP4).